The primary structure comprises 315 residues: Transaldolase (315 aa).

K131 functions as the Schiff-base intermediate with substrate in the catalytic mechanism.

This sequence belongs to the transaldolase family. Type 1 subfamily. As to quaternary structure, homodimer.

Its subcellular location is the cytoplasm. It catalyses the reaction D-sedoheptulose 7-phosphate + D-glyceraldehyde 3-phosphate = D-erythrose 4-phosphate + beta-D-fructose 6-phosphate. The protein operates within carbohydrate degradation; pentose phosphate pathway; D-glyceraldehyde 3-phosphate and beta-D-fructose 6-phosphate from D-ribose 5-phosphate and D-xylulose 5-phosphate (non-oxidative stage): step 2/3. Functionally, transaldolase is important for the balance of metabolites in the pentose-phosphate pathway. The sequence is that of Transaldolase from Actinobacillus pleuropneumoniae serotype 7 (strain AP76).